Here is a 360-residue protein sequence, read N- to C-terminus: Mannitol-1-phosphate 5-dehydrogenase (360 aa).

Residue 6–17 participates in NAD(+) binding; sequence ALHFGAGNIGRG.

Belongs to the mannitol dehydrogenase family.

It catalyses the reaction D-mannitol 1-phosphate + NAD(+) = beta-D-fructose 6-phosphate + NADH + H(+). This chain is Mannitol-1-phosphate 5-dehydrogenase, found in Mycoplasmopsis pulmonis (strain UAB CTIP) (Mycoplasma pulmonis).